The sequence spans 627 residues: Pheromone B alpha 2 receptor (627 aa).

The Extracellular segment spans residues 1 to 7 (MLDPTYP). A helical transmembrane segment spans residues 8–28 (AFPIFAFLGIVCCLVPLPWHL). Residues 29–35 (QSWNSGT) are Cytoplasmic-facing. A helical transmembrane segment spans residues 36-56 (CFLMIWTAVACLNMFVNSIIW). At 57-69 (KDHAQNVAPVWCE) the chain is on the extracellular side. The helical transmembrane segment at 70-90 (ISIRITLGASVGIPASSLCIV) threads the bilayer. Topologically, residues 91-102 (RRLYSIAKKFRA) are cytoplasmic. Residues 103-123 (VMVDALICVLFPILYIILQIV) traverse the membrane as a helical segment. At 124–150 (VQGHRFNILENIGCFPAIINTPLTYPL) the chain is on the extracellular side. Residues 151 to 171 (TFMWPVLIGVISFIYSTLALI) traverse the membrane as a helical segment. The Cytoplasmic segment spans residues 172–197 (QFNRHRLQFTQFLHSNSTLSVSRYLR). Residues 198 to 218 (LMALAMTEMMCTTPMGVFVII) traverse the membrane as a helical segment. The Extracellular segment spans residues 219–260 (LNAKATPVSPYVSWAVTHYGYGRIDQVPAIIWRSNRLLVASY). A helical transmembrane segment spans residues 261-281 (ELTRWSSPAIALIFFFYFGFA). The Cytoplasmic portion of the chain corresponds to 282–627 (QEARRNYAAA…ASPRTHRASV (346 aa)). Disordered stretches follow at residues 363–405 (LPRP…SSPI), 479–505 (TVPQ…SSSA), and 518–627 (LPST…RASV). The span at 372-387 (SSSGFSSSDSTRFGSS) shows a compositional bias: low complexity. Polar residues-rich tracts occupy residues 519 to 533 (PSTT…SLPT) and 545 to 555 (SLSQLFGISSM). Residues 569 to 607 (ATGTASPTTTAPAPASTTIAPASATMAPATTTTAPTTIA) show a composition bias toward low complexity.

Belongs to the G-protein coupled receptor 4 family.

The protein resides in the cell membrane. Functionally, receptor for the BAP2 pheromone, a prenylated mating factor. The receptor/pheromone interaction may have a role in the fusion of clamp cells. This Schizophyllum commune (Split gill fungus) protein is Pheromone B alpha 2 receptor (BAR2).